The chain runs to 492 residues: Bifunctional purine biosynthesis protein PurH (492 aa).

Residues Met-1–Val-144 enclose the MGS-like domain.

This sequence belongs to the PurH family.

It carries out the reaction (6R)-10-formyltetrahydrofolate + 5-amino-1-(5-phospho-beta-D-ribosyl)imidazole-4-carboxamide = 5-formamido-1-(5-phospho-D-ribosyl)imidazole-4-carboxamide + (6S)-5,6,7,8-tetrahydrofolate. The catalysed reaction is IMP + H2O = 5-formamido-1-(5-phospho-D-ribosyl)imidazole-4-carboxamide. It functions in the pathway purine metabolism; IMP biosynthesis via de novo pathway; 5-formamido-1-(5-phospho-D-ribosyl)imidazole-4-carboxamide from 5-amino-1-(5-phospho-D-ribosyl)imidazole-4-carboxamide (10-formyl THF route): step 1/1. The protein operates within purine metabolism; IMP biosynthesis via de novo pathway; IMP from 5-formamido-1-(5-phospho-D-ribosyl)imidazole-4-carboxamide: step 1/1. The protein is Bifunctional purine biosynthesis protein PurH of Staphylococcus epidermidis (strain ATCC 35984 / DSM 28319 / BCRC 17069 / CCUG 31568 / BM 3577 / RP62A).